The primary structure comprises 251 residues: Small ribosomal subunit protein uS2 (251 aa).

It belongs to the universal ribosomal protein uS2 family.

The polypeptide is Small ribosomal subunit protein uS2 (Deinococcus deserti (strain DSM 17065 / CIP 109153 / LMG 22923 / VCD115)).